A 412-amino-acid chain; its full sequence is CCA-adding enzyme (412 aa).

The ATP site is built by G8 and R11. Positions 8 and 11 each coordinate CTP. 2 residues coordinate Mg(2+): D21 and D23. R91, R137, and R140 together coordinate ATP. CTP-binding residues include R91, R137, and R140.

The protein belongs to the tRNA nucleotidyltransferase/poly(A) polymerase family. Bacterial CCA-adding enzyme type 2 subfamily. The cofactor is Mg(2+).

The enzyme catalyses a tRNA precursor + 2 CTP + ATP = a tRNA with a 3' CCA end + 3 diphosphate. It carries out the reaction a tRNA with a 3' CCA end + 2 CTP + ATP = a tRNA with a 3' CCACCA end + 3 diphosphate. Its function is as follows. Catalyzes the addition and repair of the essential 3'-terminal CCA sequence in tRNAs without using a nucleic acid template. Adds these three nucleotides in the order of C, C, and A to the tRNA nucleotide-73, using CTP and ATP as substrates and producing inorganic pyrophosphate. tRNA 3'-terminal CCA addition is required both for tRNA processing and repair. Also involved in tRNA surveillance by mediating tandem CCA addition to generate a CCACCA at the 3' terminus of unstable tRNAs. While stable tRNAs receive only 3'-terminal CCA, unstable tRNAs are marked with CCACCA and rapidly degraded. This Buchnera aphidicola subsp. Schizaphis graminum (strain Sg) protein is CCA-adding enzyme.